The sequence spans 760 residues: Catalase-peroxidase (760 aa).

Residues 1-24 (MAESKCPFKSQGSRSNVAGGGTRN) form a disordered region. Residues 96-242 (WHSAGTYRVF…LAAAHMGLIY (147 aa)) constitute a cross-link (tryptophyl-tyrosyl-methioninium (Trp-Tyr) (with M-268)). The Proton acceptor role is filled by His97. The tryptophyl-tyrosyl-methioninium (Tyr-Met) (with W-96) cross-link spans 242–268 (YVNPEGPDGNPDPVAAAHDIRVTFGRM). His283 is a binding site for heme b.

This sequence belongs to the peroxidase family. Peroxidase/catalase subfamily. In terms of assembly, homodimer or homotetramer. The cofactor is heme b. Formation of the three residue Trp-Tyr-Met cross-link is important for the catalase, but not the peroxidase activity of the enzyme.

Its subcellular location is the cytoplasm. The enzyme catalyses H2O2 + AH2 = A + 2 H2O. The catalysed reaction is 2 H2O2 = O2 + 2 H2O. Its function is as follows. Bifunctional enzyme with both catalase and broad-spectrum peroxidase activity. The protein is Catalase-peroxidase of Aspergillus clavatus (strain ATCC 1007 / CBS 513.65 / DSM 816 / NCTC 3887 / NRRL 1 / QM 1276 / 107).